The primary structure comprises 1244 residues: Actin cytoskeleton-regulatory complex protein SLA1 (1244 aa).

2 consecutive SH3 domains span residues 3-68 (VFLG…IEEA) and 69-132 (PVLK…PENG). 2 disordered regions span residues 128–248 (EPEN…GNHE) and 415–497 (DKKH…PKKS). The span at 140 to 159 (APAAAEAPAATPAAAPASAA) shows a compositional bias: low complexity. The segment covering 171–184 (HNDRARMMQSKEDQ) has biased composition (basic and acidic residues). A compositionally biased stretch (low complexity) spans 199–214 (ARPTATTETTDATAAA). Over residues 226–235 (NDNDDEEDDY) the composition is skewed to acidic residues. In terms of domain architecture, SH3 3 spans 353–415 (KSKKRGIVQY…PAQFIEPVRD (63 aa)). A compositionally biased stretch (basic residues) spans 429–447 (SIKKNFTKSPSRSRSRSRS). Phosphoserine is present on residues Ser-447, Ser-449, and Ser-454. Residues Lys-471 and Lys-548 each participate in a glycyl lysine isopeptide (Lys-Gly) (interchain with G-Cter in ubiquitin) cross-link. Residues 471–484 (KRSRKSSLSSHKKN) show a composition bias toward basic residues. 3 disordered regions span residues 558–592 (KAND…RDRR), 610–649 (EERS…SNNN), and 726–791 (PTNA…NLLS). 2 stretches are compositionally biased toward basic and acidic residues: residues 568–592 (TDSR…RDRR) and 610–621 (EERSRLQEKELP). A compositionally biased stretch (low complexity) spans 629–649 (TSTTSVPNTTSVPPAESSNNN). Residues 726–756 (PTNATGNMFSQPDGSLNVATSPETSLPQQLL) are compositionally biased toward polar residues. A compositionally biased stretch (low complexity) spans 757–771 (PQTTSPAQTAPSTSA). Ser-799 is modified (phosphoserine). Positions 813–853 (KAAASTPEPNLKDLEPVKTGGTTVPAAPVSSAPVSSAPAPL) are disordered. Thr-831 bears the Phosphothreonine mark. Positions 836 to 851 (VPAAPVSSAPVSSAPA) are enriched in low complexity. Position 858 is a phosphothreonine (Thr-858). Tandem repeats lie at residues 868–874 (TGFVMMP), 877–883 (TGGDMLP), and 887–893 (TGGFVVP). Residues 868–1205 (TGFVMMPMIT…NTFNTGGAMQ (338 aa)) are 16 X 7 AA approximate repeats of T-G-G-A-M-M-P. Residues Thr-887 and Thr-904 each carry the phosphothreonine modification. Tandem repeats lie at residues 923–929 (TGGAMMP) and 945–951 (TGGGLIP). Phosphothreonine occurs at positions 984 and 993. Ser-996 carries the post-translational modification Phosphoserine. A run of 5 repeats spans residues 1003–1009 (TGGTMIP), 1020–1026 (TGGAMMT), 1031–1037 (TGSAMMP), 1048–1054 (TGGAMMP), and 1065–1071 (TGGAMMP). Residue Thr-1075 is modified to Phosphothreonine. 6 repeat units span residues 1084–1090 (TGGAMIP), 1129–1135 (TGGAMNT), 1155–1161 (TGGVMQE), 1170–1176 (TGGAMQQ), 1185–1191 (TDGIMQQ), and 1200–1206 (TGGAMQQ).

This sequence belongs to the SLA1 family. Component of the PAN1 actin cytoskeleton-regulatory complex. Interacts with ABP1, KRE6, LAS17, LSB5, RSP5, RVS167, VPS1 and YSC84. Phosphorylated by PRK1.

The protein resides in the nucleus. The protein localises to the cell membrane. It localises to the endosome membrane. Its subcellular location is the cytoplasm. It is found in the cytoskeleton. The protein resides in the actin patch. In terms of biological role, component of the PAN1 actin cytoskeleton-regulatory complex required for the internalization of endosomes during actin-coupled endocytosis. The complex links the site of endocytosis to the cell membrane-associated actin cytoskeleton. Mediates uptake of external molecules and vacuolar degradation of plasma membrane proteins. Plays a role in the proper organization of the cell membrane-associated actin cytoskeleton and promotes its destabilization. In Saccharomyces cerevisiae (strain ATCC 204508 / S288c) (Baker's yeast), this protein is Actin cytoskeleton-regulatory complex protein SLA1 (SLA1).